Here is a 216-residue protein sequence, read N- to C-terminus: MSIGVIVFPGSNCDRDVQWATDGCLGMSTRRVWHEETDLSGFDAIILPGGFSYGDYLRCGAIARFAPALQSLIDFAAKGGRVLGICNGFQVLTELGLLPGALTRNQNLHFICEDAPLKVVSQRTAWMQGYNDRALTLPIAHGEGRYQCSDDTLKQLQDDDAIALSYGNNPNGSVFNIAGITNASGSVLGLMPHPERACDPAIGGTDGRRMLEALLG.

Residues serine 2–glycine 216 enclose the Glutamine amidotransferase type-1 domain. Cysteine 86 functions as the Nucleophile in the catalytic mechanism. Active-site residues include histidine 193 and glutamate 195.

In terms of assembly, part of the FGAM synthase complex composed of 1 PurL, 1 PurQ and 2 PurS subunits.

The protein localises to the cytoplasm. The enzyme catalyses N(2)-formyl-N(1)-(5-phospho-beta-D-ribosyl)glycinamide + L-glutamine + ATP + H2O = 2-formamido-N(1)-(5-O-phospho-beta-D-ribosyl)acetamidine + L-glutamate + ADP + phosphate + H(+). It catalyses the reaction L-glutamine + H2O = L-glutamate + NH4(+). The protein operates within purine metabolism; IMP biosynthesis via de novo pathway; 5-amino-1-(5-phospho-D-ribosyl)imidazole from N(2)-formyl-N(1)-(5-phospho-D-ribosyl)glycinamide: step 1/2. Functionally, part of the phosphoribosylformylglycinamidine synthase complex involved in the purines biosynthetic pathway. Catalyzes the ATP-dependent conversion of formylglycinamide ribonucleotide (FGAR) and glutamine to yield formylglycinamidine ribonucleotide (FGAM) and glutamate. The FGAM synthase complex is composed of three subunits. PurQ produces an ammonia molecule by converting glutamine to glutamate. PurL transfers the ammonia molecule to FGAR to form FGAM in an ATP-dependent manner. PurS interacts with PurQ and PurL and is thought to assist in the transfer of the ammonia molecule from PurQ to PurL. The polypeptide is Phosphoribosylformylglycinamidine synthase subunit PurQ (Synechococcus sp. (strain CC9605)).